Reading from the N-terminus, the 243-residue chain is Probable HTH-type transcriptional regulator GfsR (243 aa).

The disordered stretch occupies residues 154 to 179 (AAVARPDTSGSATGRTGDSSPSLALS). Residues 161 to 178 (TSGSATGRTGDSSPSLAL) are compositionally biased toward polar residues. Residues 171–236 (DSSPSLALSP…QALLRWLGHP (66 aa)) form the HTH luxR-type domain. Positions 195–214 (VREIAVEMRLAEKTVRNYLS) form a DNA-binding region, H-T-H motif.

It participates in antibiotic biosynthesis. In terms of biological role, probable DNA-binding protein that contributes to the control of expression of the biosynthesis operon of the 16-membered macrolide antibiotics FD-891 and FD-892. Might be a member of a two-component regulatory system; the putative sensor kinase gene is unknown. The sequence is that of Probable HTH-type transcriptional regulator GfsR from Streptomyces halstedii.